Reading from the N-terminus, the 317-residue chain is MTDKLTSLRQLTTVVADTGDIAAMKQYQPQDATTNPSLILNAAQIPEYRKLIDDAIAWARAQSGDRAQQIVDASDKLAVNIGLEILKLIPGRISTEVDARLSYDTEASVAKAKRLIKLYNDAGISNDRILIKLASTWQGIRAAERLEKEGINCNLTLLFSFAQARACAEAGVFLISPFVGRILDWHKANGGKSEFAPAEDPGVISVTEIYNYYKQHGYETVVMGASFRNVGEILELAGCDRLTISPPLLKELSESTGNVERKLADQGEIKARPARMSEAEFYWQHNQDPMAVEKLADGIRKFAVDQGKLESMIGALL.

K132 (schiff-base intermediate with substrate) is an active-site residue.

Belongs to the transaldolase family. Type 1 subfamily. As to quaternary structure, homodimer.

The protein localises to the cytoplasm. It carries out the reaction D-sedoheptulose 7-phosphate + D-glyceraldehyde 3-phosphate = D-erythrose 4-phosphate + beta-D-fructose 6-phosphate. The protein operates within carbohydrate degradation; pentose phosphate pathway; D-glyceraldehyde 3-phosphate and beta-D-fructose 6-phosphate from D-ribose 5-phosphate and D-xylulose 5-phosphate (non-oxidative stage): step 2/3. Transaldolase is important for the balance of metabolites in the pentose-phosphate pathway. This is Transaldolase from Edwardsiella ictaluri (strain 93-146).